The primary structure comprises 38 residues: Cytochrome b6-f complex subunit 5 (38 aa).

Residues 5 to 25 (LLSGIVLGLIPITLAGLFVTA) traverse the membrane as a helical segment.

It belongs to the PetG family. The 4 large subunits of the cytochrome b6-f complex are cytochrome b6, subunit IV (17 kDa polypeptide, PetD), cytochrome f and the Rieske protein, while the 4 small subunits are PetG, PetL, PetM and PetN. The complex functions as a dimer.

The protein localises to the plastid. It is found in the chloroplast thylakoid membrane. In terms of biological role, component of the cytochrome b6-f complex, which mediates electron transfer between photosystem II (PSII) and photosystem I (PSI), cyclic electron flow around PSI, and state transitions. PetG is required for either the stability or assembly of the cytochrome b6-f complex. This chain is Cytochrome b6-f complex subunit 5, found in Adiantum capillus-veneris (Maidenhair fern).